Here is a 390-residue protein sequence, read N- to C-terminus: Methionyl-tRNA formyltransferase, mitochondrial (390 aa).

The transit peptide at 1–33 (MRVLLRCCCGHLPVGGGAGRRSNPRWRALARLS) directs the protein to the mitochondrion.

The protein belongs to the Fmt family.

Its subcellular location is the mitochondrion. The catalysed reaction is L-methionyl-tRNA(fMet) + (6R)-10-formyltetrahydrofolate = N-formyl-L-methionyl-tRNA(fMet) + (6S)-5,6,7,8-tetrahydrofolate + H(+). In terms of biological role, methionyl-tRNA formyltransferase that formylates methionyl-tRNA in mitochondria and is crucial for translation initiation. This chain is Methionyl-tRNA formyltransferase, mitochondrial (MTFMT), found in Bos taurus (Bovine).